The chain runs to 373 residues: Chaperone protein DnaJ (373 aa).

The J domain maps to 4–69 (SYYEILEITQ…EKRAIYDRYG (66 aa)). The CR-type zinc finger occupies 135-212 (GCKKNIDFTY…CKGLGYNESK (78 aa)). Zn(2+) is bound by residues C148, C151, C164, C167, C186, C189, C200, and C203. CXXCXGXG motif repeat units lie at residues 148–155 (CKTCNGTG), 164–171 (CPKCQGRG), 186–193 (CPDCQGIG), and 200–207 (CSDCKGLG).

It belongs to the DnaJ family. Homodimer. Zn(2+) is required as a cofactor.

The protein resides in the cytoplasm. Participates actively in the response to hyperosmotic and heat shock by preventing the aggregation of stress-denatured proteins and by disaggregating proteins, also in an autonomous, DnaK-independent fashion. Unfolded proteins bind initially to DnaJ; upon interaction with the DnaJ-bound protein, DnaK hydrolyzes its bound ATP, resulting in the formation of a stable complex. GrpE releases ADP from DnaK; ATP binding to DnaK triggers the release of the substrate protein, thus completing the reaction cycle. Several rounds of ATP-dependent interactions between DnaJ, DnaK and GrpE are required for fully efficient folding. Also involved, together with DnaK and GrpE, in the DNA replication of plasmids through activation of initiation proteins. In Campylobacter jejuni (strain RM1221), this protein is Chaperone protein DnaJ.